Consider the following 229-residue polypeptide: Type-5 uracil-DNA glycosylase (229 aa).

4 residues coordinate [4Fe-4S] cluster: Cys19, Cys22, Cys123, and Cys138.

The protein belongs to the uracil-DNA glycosylase (UDG) superfamily. Type 5 (UDGb) family.

In terms of biological role, DNA glycosylase with broad substrate specificity. The protein is Type-5 uracil-DNA glycosylase of Mycobacterium leprae (strain TN).